Consider the following 198-residue polypeptide: Protein hunchback (198 aa).

Disordered stretches follow at residues 16 to 111 (SHHH…LPGL) and 152 to 198 (NDKL…KYMA). Residues 17-31 (HHHHHHHAHHSHHQH) are compositionally biased toward basic residues. 2 stretches are compositionally biased toward low complexity: residues 35-46 (SNSNSNASSPHQ) and 56-83 (SNTN…QQQQ). Polar residues predominate over residues 95-105 (PSPSNNDQNSP). A compositionally biased stretch (basic and acidic residues) spans 179–198 (EPEKEHDLMSNSSEDMKYMA).

It belongs to the hunchback C2H2-type zinc-finger protein family.

Its subcellular location is the nucleus. Gap class segmentation protein that controls development of head structures. The protein is Protein hunchback (hb) of Drosophila lineosetae (Fruit fly).